We begin with the raw amino-acid sequence, 155 residues long: MGRQVKVVTDNRRARHDYFIEETYEAGIALTGTEVKSLRNGRANIKDSYARVENGELILHDMHISPYEQGNRFNHEPRRPRRLLMHRYEIQRLYGKVREKGLTLIPLKVYFNERGLAKVELALVKGKRLYDKREDIAARDAQREIARALRERQKV.

It belongs to the SmpB family.

It localises to the cytoplasm. Required for rescue of stalled ribosomes mediated by trans-translation. Binds to transfer-messenger RNA (tmRNA), required for stable association of tmRNA with ribosomes. tmRNA and SmpB together mimic tRNA shape, replacing the anticodon stem-loop with SmpB. tmRNA is encoded by the ssrA gene; the 2 termini fold to resemble tRNA(Ala) and it encodes a 'tag peptide', a short internal open reading frame. During trans-translation Ala-aminoacylated tmRNA acts like a tRNA, entering the A-site of stalled ribosomes, displacing the stalled mRNA. The ribosome then switches to translate the ORF on the tmRNA; the nascent peptide is terminated with the 'tag peptide' encoded by the tmRNA and targeted for degradation. The ribosome is freed to recommence translation, which seems to be the essential function of trans-translation. This Moorella thermoacetica (strain ATCC 39073 / JCM 9320) protein is SsrA-binding protein.